We begin with the raw amino-acid sequence, 301 residues long: Probable alpha-L-glutamate ligase (301 aa).

The ATP-grasp domain occupies Leu104–Glu287. ATP contacts are provided by residues Lys141, Glu178–Tyr179, Asp187, and Arg211–Asn213. Positions 248, 260, and 262 each coordinate Mg(2+). The Mn(2+) site is built by Asp248, Glu260, and Asn262.

It belongs to the RimK family. Mg(2+) is required as a cofactor. The cofactor is Mn(2+).

This chain is Probable alpha-L-glutamate ligase, found in Pseudomonas aeruginosa (strain UCBPP-PA14).